Reading from the N-terminus, the 785-residue chain is Conserved oligomeric Golgi complex subunit 4 (785 aa).

The segment at 1 to 24 (MADFDSPPKLSGVQPPSEGVGGGR) is disordered. Position 2 is an N-acetylalanine (Ala2). The interaction with SCFD1 stretch occupies residues 2–84 (ADFDSPPKLS…VTLHRMGPNL (83 aa)). Phosphoserine is present on Ser6. The segment at 85 to 153 (QLIEGDAKQL…TALRNEDYEQ (69 aa)) is interaction with STX5. The interval 618 to 740 (PQVQPWINSF…SQMATILNLE (123 aa)) is d domain. Residues 741-785 (RVTEILDYWGPNSGPLTWRLTPAEVRQVLALRIDFRSEDIKRLRL) are e domain; essential for proper cell surface glycosylation.

Belongs to the COG4 family. Monomer. Component of the conserved oligomeric Golgi (COG) complex which is composed of eight different subunits and is required for normal Golgi morphology and localization. Mediates interaction of SCFD1 with the COG complex. Interacts with STX5.

It localises to the cytoplasm. It is found in the cytosol. Its subcellular location is the golgi apparatus membrane. In terms of biological role, required for normal Golgi function. Plays a role in SNARE-pin assembly and Golgi-to-ER retrograde transport via its interaction with SCFD1. This Pongo abelii (Sumatran orangutan) protein is Conserved oligomeric Golgi complex subunit 4 (COG4).